A 45-amino-acid polypeptide reads, in one-letter code: Large ribosomal subunit protein bL34 (45 aa).

Belongs to the bacterial ribosomal protein bL34 family.

The sequence is that of Large ribosomal subunit protein bL34 from Clavibacter michiganensis subsp. michiganensis (strain NCPPB 382).